The following is a 776-amino-acid chain: Protein SEY1 (776 aa).

Residues 1–681 (MADRSAIQLI…KRSIITTRTH (681 aa)) lie on the Cytoplasmic side of the membrane. One can recognise a GB1/RHD3-type G domain in the interval 34-263 (GLDYHVISVF…TENYYFKPQY (230 aa)). GTP is bound at residue 44-51 (GSQSSGKS). Residues 682 to 702 (IPPWIYVLLAVLGWNEFVAVI) form a helical membrane-spanning segment. Over 703–705 (RNP) the chain is Lumenal. A helical membrane pass occupies residues 706–726 (LFVTLTLILGATFFVIHKFGL). Residues 727–776 (WGPVVNVVQSAVGETRTAIKDKLRQFVVEDHEVKESFEMKDFSKNEQKEK) are Cytoplasmic-facing.

Belongs to the TRAFAC class dynamin-like GTPase superfamily. GB1/RHD3 GTPase family. RHD3 subfamily. As to quaternary structure, interacts with RTN1 and YOP1; GTP binding is not required for these interactions.

The protein localises to the endoplasmic reticulum membrane. Its function is as follows. Cooperates with the reticulon proteins RTN1 and RTN2 and the tubule-shaping DP1 family protein YOP1 to generate and maintain the structure of the tubular endoplasmic reticulum network. Has GTPase activity, which is required for its function in ER organization. This Saccharomyces cerevisiae (strain RM11-1a) (Baker's yeast) protein is Protein SEY1.